The sequence spans 426 residues: Histidine--tRNA ligase (426 aa).

This sequence belongs to the class-II aminoacyl-tRNA synthetase family. As to quaternary structure, homodimer.

It localises to the cytoplasm. It catalyses the reaction tRNA(His) + L-histidine + ATP = L-histidyl-tRNA(His) + AMP + diphosphate + H(+). The chain is Histidine--tRNA ligase from Streptococcus gordonii (strain Challis / ATCC 35105 / BCRC 15272 / CH1 / DL1 / V288).